The following is a 728-amino-acid chain: Leucine-rich repeat and calponin homology domain-containing protein 1 (728 aa).

Residues 24 to 36 (HHPHHHHHHHQHH) are compositionally biased toward basic residues. Positions 24–57 (HHPHHHHHHHQHHGGTGAPGGAGGGGGGSGGFNL) are disordered. A compositionally biased stretch (gly residues) spans 37-54 (GGTGAPGGAGGGGGGSGG). LRR repeat units lie at residues 98–119 (DTVQADLSKNRLVEVPMELCHF), 121–143 (SLEILNLYHNCIRVIPEAIVNLQ), 144–166 (MLTYLNLSRNQLSALPACLCGLP), 167–187 (LKVLIASNNKLGSLPEEIGQL), 189–210 (QLMELDVSCNEITALPQQIGQL), 212–234 (SLRELNVRRNYLKVLPQELVDLS), 235–255 (LVKFDFSCNKVLVIPICFREM), 257–278 (QLQVLLLENNPLQSPPAQICTK), and 283–304 (IFKYLSIQACQIKTADSLYLHT). Residues 311–322 (HQHVEDGKKDSD) are compositionally biased toward basic and acidic residues. A disordered region spans residues 311 to 348 (HQHVEDGKKDSDSGVGSDNGDKRLSATEPSDEDTVSLN). Ser370 bears the Phosphoserine mark. Residues 377–398 (HQEFQPEPSLLGDSTNSGEERD) form a disordered region. Phosphoserine is present on Ser409. Over residues 516–525 (LQSNGSQYSP) the composition is skewed to polar residues. Positions 516–547 (LQSNGSQYSPNEIRENSPAVSPTTNSTAPFGL) are disordered. Phosphoserine occurs at positions 532 and 536. Positions 533-543 (PAVSPTTNSTA) are enriched in polar residues. Phosphothreonine is present on Thr568. Residues 576-692 (MREEKELVEQ…TLLALGEKAP (117 aa)) form the Calponin-homology (CH) domain.

In terms of assembly, interacts (via LRR repeats) with unphosphorylated DOCK8 (via DHR-2 domain); the interaction prevents the interaction between DOCK8 and CDC42.

Its subcellular location is the cytoplasm. In terms of biological role, acts as a negative regulator of GTPase CDC42 by sequestering CDC42-guanine exchange factor DOCK8. Probably by preventing CDC42 activation, negatively regulates CD4(+) T-cell migration. In Homo sapiens (Human), this protein is Leucine-rich repeat and calponin homology domain-containing protein 1 (LRCH1).